The following is a 1861-amino-acid chain: Golgi-specific brefeldin A-resistance guanine nucleotide exchange factor 1 (1861 aa).

Positions 1-211 (MVDKNIYIIQ…EPKSYVGTNM (211 aa)) are DCB; DCB:DCB domain and DCB:HUS domain interaction. Residues 1–380 (MVDKNIYIIQ…SVHDMDYVNP (380 aa)) form an interaction with RAB1B region. Disordered stretches follow at residues 210 to 264 (NMKK…LTGG) and 289 to 353 (CTDS…VESI). Over residues 227-241 (WKKQKRSPRPPRHTT) the composition is skewed to basic residues. Residues 253–262 (NGATLPSNLT) are compositionally biased toward polar residues. 2 positions are modified to phosphoserine: Ser349 and Ser352. Thr507 carries the post-translational modification Phosphothreonine. Residues 530–550 (RIPSFVTELYINYDCDYYCSN) form an HUS; DCB:HUS domain interaction region. The segment at 603–634 (QEKKETARPGFEAVDGNPETNKSERATSDGKS) is disordered. The region spanning 692–882 (ELIEIKNKKK…EDMYHAIKNE (191 aa)) is the SEC7 domain. The segment at 886 to 1372 (MPEEQTGLVR…LSRPGPSPLV (487 aa)) is phosphatidylinositol-phosphate binding; required for translocation to the leading edge and for ARF1 activation upon GPCR signaling. The segment covering 1286 to 1296 (TARADAPDAGA) has biased composition (low complexity). The tract at residues 1286–1335 (TARADAPDAGAQSDSELPSYHQNDVSLDRGYTSDSEVYTDHGRPGKIHRS) is disordered. Over residues 1297–1310 (QSDSELPSYHQNDV) the composition is skewed to polar residues. Ser1298 carries the post-translational modification Phosphoserine. Phosphotyrosine is present on Tyr1316. Residues Ser1318, Ser1320, and Ser1335 each carry the phosphoserine modification. The residue at position 1337 (Thr1337) is a Phosphothreonine. Disordered stretches follow at residues 1431–1486 (GCKS…EGVP) and 1727–1812 (PMPA…PLIL). Residues 1434-1448 (SQDKRSKSHKYDSKG) show a composition bias toward basic and acidic residues. Ser1477, Ser1775, and Ser1786 each carry phosphoserine. Positions 1776–1793 (TRAPSSSSPGSPMASSPS) are enriched in low complexity.

Can form homodimers and probably homotetramers. Interacts with COPG1; the interaction is independent on ARF1 activation. Interacts with ARF1, ARF3, ARF4 and ARF5. Interacts with RAB1B (GTP-bound form); required for GBF1 membrane association. Interacts with GGA1, GGA2 and GGA3. Interacts with USO1. Interacts (via SEC7 domain) with PNPLA2 (via C-terminus); the interaction is direct. Interacts with ARMH3.

It localises to the golgi apparatus. Its subcellular location is the cis-Golgi network. The protein localises to the endoplasmic reticulum-Golgi intermediate compartment. It is found in the trans-Golgi network. The protein resides in the cytoplasm. It localises to the lipid droplet. Its subcellular location is the membrane. Functionally, guanine-nucleotide exchange factor (GEF) for members of the Arf family of small GTPases involved in trafficking in the early secretory pathway; its GEF activity initiates the coating of nascent vesicles via the localized generation of activated ARFs through replacement of GDP with GTP. Recruitment to cis-Golgi membranes requires membrane association of Arf-GDP and can be regulated by ARF1, ARF3, ARF4 and ARF5. Involved in the recruitment of the COPI coat complex to the endoplasmic reticulum exit sites (ERES), and the endoplasmic reticulum-Golgi intermediate (ERGIC) and cis-Golgi compartments which implicates ARF1 activation. Involved in COPI vesicle-dependent retrograde transport from the ERGIC and cis-Golgi compartments to the endoplasmic reticulum (ER). Involved in the trans-Golgi network recruitment of GGA1, GGA2, GGA3, BIG1, BIG2, and the AP-1 adaptor protein complex related to chlathrin-dependent transport; the function requires its GEF activity (probably at least in part on ARF4 and ARF5). Has GEF activity towards ARF1. Has in vitro GEF activity towards ARF5. Involved in the processing of PSAP. Required for the assembly of the Golgi apparatus. The AMPK-phosphorylated form is involved in Golgi disassembly during mitotis and under stress conditions. May be involved in the COPI vesicle-dependent recruitment of PNPLA2 to lipid droplets; however, this function is under debate. In neutrophils, involved in G protein-coupled receptor (GPCR)-mediated chemotaxis und superoxide production. Proposed to be recruited by phosphatidylinositol-phosphates generated upon GPCR stimulation to the leading edge where it recruits and activates ARF1, and is involved in recruitment of GIT2 and the NADPH oxidase complex. Plays a role in maintaining mitochondrial morphology. This Mus musculus (Mouse) protein is Golgi-specific brefeldin A-resistance guanine nucleotide exchange factor 1.